The chain runs to 236 residues: Large ribosomal subunit protein uL1 (236 aa).

The protein belongs to the universal ribosomal protein uL1 family. As to quaternary structure, part of the 50S ribosomal subunit.

Its function is as follows. Binds directly to 23S rRNA. The L1 stalk is quite mobile in the ribosome, and is involved in E site tRNA release. Protein L1 is also a translational repressor protein, it controls the translation of the L11 operon by binding to its mRNA. The chain is Large ribosomal subunit protein uL1 from Sorangium cellulosum (strain So ce56) (Polyangium cellulosum (strain So ce56)).